The primary structure comprises 443 residues: 23S rRNA (uracil(1939)-C(5))-methyltransferase RlmD (443 aa).

Residues 8-66 (KPLPAEPIAAHIESFAHDGKGIAHVDGRVVFVDGALPGEDVTFVYTEIKRDYAAGRVVE) form the TRAM domain. Residues Cys-79, Cys-85, Cys-88, and Cys-167 each coordinate [4Fe-4S] cluster. The S-adenosyl-L-methionine site is built by Gln-276, Phe-305, Asn-310, Glu-326, Asp-353, and Asp-374. The active-site Nucleophile is the Cys-400.

This sequence belongs to the class I-like SAM-binding methyltransferase superfamily. RNA M5U methyltransferase family. RlmD subfamily.

The enzyme catalyses uridine(1939) in 23S rRNA + S-adenosyl-L-methionine = 5-methyluridine(1939) in 23S rRNA + S-adenosyl-L-homocysteine + H(+). In terms of biological role, catalyzes the formation of 5-methyl-uridine at position 1939 (m5U1939) in 23S rRNA. The sequence is that of 23S rRNA (uracil(1939)-C(5))-methyltransferase RlmD from Methylococcus capsulatus (strain ATCC 33009 / NCIMB 11132 / Bath).